Here is a 1125-residue protein sequence, read N- to C-terminus: MNALQQKCRPKHQVLVLKCYPRTIKGAVDVKPNSSELSYLLFYCQSRRAKIQKVGSFLEKKTASDVYHQRIGNVQVTLQILAALIEKSPKDLPLFASCVLSILEQVLKSSDITMVESSIPTFQAFCENHDPTSLAADQAYFRQYVSVVQQYASLASTRPAPGKAQHSKPIALRWRNAGLEAIRSVASSDALSSMVARQYDILVPMILENLWTENEDFLDVLLQRVQGDNNVEDAPLLRRRTSNATAQPSETTGGEPGPNPIAFLGTAVDVDKLAEEDIGVLAMQCLRQVFVAPSRSQTHNPTIALLRFIEERVDQNEQVVKRDAHGKDNGWAIKVFLMAARWAPVADRFTILLTAIEVLTQRPLTDDNLRHHNTQAAMISALLRSDVNLIGLSVMDVLLNLLRHMQRLVQMPGDPDSMRVEDETIGTDEGAIGQRRELLFRLQQCVGDLATHVYYADQISDMIQTILLKLRPSRPTSPPNSSPNGERSDNGAAEDQPLESLFALTVAKIAALKAIKAILWVASPRTKMSGGHINLSRNRVPIQTWDGTQWLLRDPDGLVRKAYVDAVVTWLDRETTPADSLARDESARTTLKNRAAQENNLARRVVSSASARVDKSANAPRSHFLQLLHLAIYDHALQFVDYENDLVLLHVLLAKLVSQLGVNAAKFGIPMIFRLQEDIQDVETPLGKVRIGSLVHGYLWTLTEKFDCEGTAPGSAIHGEIIRRRSKNFWVEGINIPAPAVDLVGTPGQARPPPQMNMRDLESEALLPFDERASLVDCICTGYQELATSPPTSPTTSPGRNFTHPMLGSTLSATPKDETQREVPAQFRELMLGDWTREAVLANTQAGSSQTASLNGTNGTHRNTVNNNNRLGVNGVTSPNGSNSNLRPSSSPTGPNGVQAGRTRKTSIRSNGGGGSPAHSTYRAKAQQPVTSVEQLKAVLSGHLQPPPTSHGINFQHSDDSDDSLVSYDMAPSELSFNPAASGSRQGSPGNTSQAASSPPRRTSQDRTQQLKFGGPLVPGEESVVNGAGGQEGSNGAAGNLGVPISRTTSRTQPQATTAHTTLPRPSTSSKRSIKSRAGSRAGPMSSSWLGEKPPAMDLAALLKGIDSASISDIKSLGAGGKPPY.

Disordered stretches follow at residues 240–261 (RTSN…PNPI), 471–493 (RPSR…NGAA), 788–819 (TSPP…KDET), and 845–1093 (QAGS…LGEK). Polar residues predominate over residues 242 to 252 (SNATAQPSETT). Over residues 788–798 (TSPPTSPTTSP) the composition is skewed to low complexity. Over residues 845–854 (QAGSSQTASL) the composition is skewed to polar residues. The span at 855 to 877 (NGTNGTHRNTVNNNNRLGVNGVT) shows a compositional bias: low complexity. Composition is skewed to polar residues over residues 878 to 896 (SPNG…TGPN), 975 to 1011 (LSFN…TQQL), and 1046 to 1071 (SRTT…TSSK).

Belongs to the EFR3 family.

This chain is Protein efr-3 (efr-3), found in Neurospora crassa (strain ATCC 24698 / 74-OR23-1A / CBS 708.71 / DSM 1257 / FGSC 987).